The sequence spans 193 residues: uncharacterized protein (193 aa).

Helical transmembrane passes span 40 to 56 (LYIASLAGFIFGLLKLI), 63 to 79 (AAGLFVFPIKGIISSLC), 86 to 110 (CSGYMLATFLSLFSLALIIVGIVSC), and 117 to 138 (FIFPIISIGMALATTETCFQIY). The disordered stretch occupies residues 158–193 (TTTKLSRSSSAPDLSCPSLSTQPTSPNQSLSAYKKY).

The protein belongs to the chlamydial CPn_0442/CT_006/TC_0274 family.

The protein localises to the cell membrane. This is an uncharacterized protein from Chlamydia muridarum (strain MoPn / Nigg).